The chain runs to 140 residues: Nucleoside diphosphate kinase (140 aa).

ATP is bound by residues Lys11, Phe59, Arg87, Thr93, Arg104, and Asn114. His117 functions as the Pros-phosphohistidine intermediate in the catalytic mechanism.

This sequence belongs to the NDK family. As to quaternary structure, homotetramer. It depends on Mg(2+) as a cofactor.

The protein resides in the cytoplasm. The catalysed reaction is a 2'-deoxyribonucleoside 5'-diphosphate + ATP = a 2'-deoxyribonucleoside 5'-triphosphate + ADP. The enzyme catalyses a ribonucleoside 5'-diphosphate + ATP = a ribonucleoside 5'-triphosphate + ADP. Functionally, major role in the synthesis of nucleoside triphosphates other than ATP. The ATP gamma phosphate is transferred to the NDP beta phosphate via a ping-pong mechanism, using a phosphorylated active-site intermediate. The sequence is that of Nucleoside diphosphate kinase from Methylocella silvestris (strain DSM 15510 / CIP 108128 / LMG 27833 / NCIMB 13906 / BL2).